A 391-amino-acid polypeptide reads, in one-letter code: Serine acetyltransferase 3, mitochondrial (391 aa).

Disordered regions lie at residues 40–82 (KHHT…HDDE) and 353–375 (VGNP…IPGL). The span at 45-56 (SPPPSPPPPPPM) shows a compositional bias: pro residues.

This sequence belongs to the transferase hexapeptide repeat family. As to quaternary structure, homomultimer. Interacts with OASC. Component of the cysteine synthase complex (CSC) composed of two OAS-TL dimers and one SAT hexamer. In terms of tissue distribution, ubiquitous with higher levels in leaves and siliques. Localized in vascular tissues, particularly in phloem.

Its subcellular location is the mitochondrion. The enzyme catalyses L-serine + acetyl-CoA = O-acetyl-L-serine + CoA. The protein operates within amino-acid biosynthesis; L-cysteine biosynthesis; L-cysteine from L-serine: step 1/2. The polypeptide is Serine acetyltransferase 3, mitochondrial (SAT3) (Arabidopsis thaliana (Mouse-ear cress)).